A 123-amino-acid chain; its full sequence is Large ribosomal subunit protein bL12 (123 aa).

It belongs to the bacterial ribosomal protein bL12 family. In terms of assembly, homodimer. Part of the ribosomal stalk of the 50S ribosomal subunit. Forms a multimeric L10(L12)X complex, where L10 forms an elongated spine to which 2 to 4 L12 dimers bind in a sequential fashion. Binds GTP-bound translation factors.

Forms part of the ribosomal stalk which helps the ribosome interact with GTP-bound translation factors. Is thus essential for accurate translation. The protein is Large ribosomal subunit protein bL12 of Ectopseudomonas mendocina (strain ymp) (Pseudomonas mendocina).